The sequence spans 1107 residues: Rho GTPase-activating protein 39 (1107 aa).

The tract at residues 1–21 (MSQAQDYECRSHHVDEQEPRI) is disordered. Ser2 carries the post-translational modification N-acetylserine. Over residues 7–19 (YECRSHHVDEQEP) the composition is skewed to basic and acidic residues. WW domains follow at residues 25-58 (STRL…PPAG) and 63-97 (RTSE…RPQN). Positions 111–122 (QNTESPRASADN) are enriched in polar residues. Disordered stretches follow at residues 111 to 173 (QNTE…PPGV), 218 to 267 (PSFL…PERR), 282 to 311 (SPLL…LYEE), and 326 to 370 (MDVQ…LMRT). Positions 123 to 136 (SPGRGSRDGSTGSS) are enriched in low complexity. The span at 242–254 (SGSQHSPNLQTFV) shows a compositional bias: polar residues. A Phosphoserine modification is found at Ser282. Polar residues-rich tracts occupy residues 331–343 (EANS…SPQR) and 353–369 (LQTT…QLMR). 4 positions are modified to phosphoserine: Ser380, Ser384, Ser402, and Ser403. 3 disordered regions span residues 404 to 429 (PKLR…QPSP), 441 to 529 (SGDY…RASL), and 563 to 585 (MKQR…GAVP). The span at 470 to 484 (SWSSQQDTMSSTGYS) shows a compositional bias: polar residues. Phosphoserine is present on residues Ser597, Ser683, Ser708, and Ser719. The MyTH4 domain maps to 715–867 (WSSESIKKPM…PYVEEPDGVA (153 aa)). The Rho-GAP domain maps to 914-1102 (SALQEVMSMQ…VLIQHLDTSF (189 aa)).

It is found in the nucleus. In Mus musculus (Mouse), this protein is Rho GTPase-activating protein 39 (Arhgap39).